The primary structure comprises 562 residues: NAD-dependent histone deacetylase SIR2 (562 aa).

Residues 1-67 (MTIPHMKYAV…RETNTTDPLG (67 aa)) form a disordered region. Positions 11–25 (SKTSENKVSNTVSPT) are enriched in polar residues. Over residues 26–36 (QDKDAIRKQPD) the composition is skewed to basic and acidic residues. The region spanning 237 to 527 (RLSNFFTIDH…AMVAQKCGWT (291 aa)) is the Deacetylase sirtuin-type domain. NAD(+) is bound by residues 262–281 (GAGV…EGFY) and 344–347 (QNID). Residue His364 is the Proton acceptor of the active site. The Zn(2+) site is built by Cys372, Cys375, Cys396, and Cys399. NAD(+)-binding positions include 471-473 (GTS), 496-498 (NRD), and Cys513.

It belongs to the sirtuin family. Class I subfamily. Homomultimer. Forms a complex with SIR3 and SIR4. Component of the RENT complex, at least composed of SIR2, CDC14 and NET1. The RENT complex interacts with FOB1. Interacts with ESC8. Interacts with and ZDS2. Interacts with MCM10. Interacts with SLX5. Interacts with NSI1. Requires Zn(2+) as cofactor.

It localises to the nucleus. It is found in the nucleolus. The enzyme catalyses N(6)-acetyl-L-lysyl-[protein] + NAD(+) + H2O = 2''-O-acetyl-ADP-D-ribose + nicotinamide + L-lysyl-[protein]. With respect to regulation, its activity is increased by calorie restriction, which slows the pace of aging and increases maximum lifespan. Activated by resveratrol (3,5,4'-trihydroxy-trans-stilbene), which is found in red wine. In terms of biological role, NAD-dependent deacetylase, which participates in a wide range of cellular events including chromosome silencing, chromosome segregation, DNA recombination and the determination of life span. Involved in transcriptional repression of the silent mating-type loci HML and HMR and telomeric silencing via its association with SIR3 and SIR4. Plays a central role in ribosomal DNA (rDNA) silencing via its association with the RENT complex, preventing hyperrecombination, and repressing transcription from foreign promoters, which contributes to extending life span. Probably represses transcription via the formation of heterochromatin structure, which involves the compaction of chromatin fiber into a more condensed form, although this complex in at least one case can still bind euchromatic levels of positive transcription regulators. Although it displays some NAD-dependent histone deacetylase activity on histone H3K9Ac and H3K14Ac and histone H4K16Ac in vitro, such activity is unclear in vivo and may not be essential. This chain is NAD-dependent histone deacetylase SIR2 (SIR2), found in Saccharomyces cerevisiae (strain ATCC 204508 / S288c) (Baker's yeast).